A 233-amino-acid polypeptide reads, in one-letter code: Phosphoribosylaminoimidazole-succinocarboxamide synthase (233 aa).

It belongs to the SAICAR synthetase family.

It carries out the reaction 5-amino-1-(5-phospho-D-ribosyl)imidazole-4-carboxylate + L-aspartate + ATP = (2S)-2-[5-amino-1-(5-phospho-beta-D-ribosyl)imidazole-4-carboxamido]succinate + ADP + phosphate + 2 H(+). Its pathway is purine metabolism; IMP biosynthesis via de novo pathway; 5-amino-1-(5-phospho-D-ribosyl)imidazole-4-carboxamide from 5-amino-1-(5-phospho-D-ribosyl)imidazole-4-carboxylate: step 1/2. This chain is Phosphoribosylaminoimidazole-succinocarboxamide synthase, found in Thermococcus sibiricus (strain DSM 12597 / MM 739).